Consider the following 134-residue polypeptide: uncharacterized protein (134 aa).

The tract at residues Met1 to Glu30 is disordered. Residues Arg10–Glu30 show a composition bias toward basic and acidic residues.

This is an uncharacterized protein from Homo sapiens (Human).